The sequence spans 603 residues: uncharacterized protein (603 aa).

Residues 257-281 (AGEAASSDHDQKISRVTRKRPREPK) are disordered.

This is an uncharacterized protein from Saccharomyces cerevisiae (strain ATCC 204508 / S288c) (Baker's yeast).